The primary structure comprises 705 residues: Elongation factor G (705 aa).

In terms of domain architecture, tr-type G spans 8-289 (VNYRNIGISA…TVINYLPSPK (282 aa)). Residues 17–24 (AHIDAGKT), 88–92 (DTPGH), and 142–145 (NKMD) each bind GTP.

The protein belongs to the TRAFAC class translation factor GTPase superfamily. Classic translation factor GTPase family. EF-G/EF-2 subfamily.

It localises to the cytoplasm. In terms of biological role, catalyzes the GTP-dependent ribosomal translocation step during translation elongation. During this step, the ribosome changes from the pre-translocational (PRE) to the post-translocational (POST) state as the newly formed A-site-bound peptidyl-tRNA and P-site-bound deacylated tRNA move to the P and E sites, respectively. Catalyzes the coordinated movement of the two tRNA molecules, the mRNA and conformational changes in the ribosome. This is Elongation factor G from Wigglesworthia glossinidia brevipalpis.